The sequence spans 337 residues: Ferredoxin--NADP reductase (337 aa).

Positions 35, 43, 48, 88, 122, 289, and 330 each coordinate FAD.

Belongs to the ferredoxin--NADP reductase type 2 family. As to quaternary structure, homodimer. FAD serves as cofactor.

The enzyme catalyses 2 reduced [2Fe-2S]-[ferredoxin] + NADP(+) + H(+) = 2 oxidized [2Fe-2S]-[ferredoxin] + NADPH. The polypeptide is Ferredoxin--NADP reductase (Ehrlichia ruminantium (strain Welgevonden)).